The primary structure comprises 170 residues: 3-dehydroquinate dehydratase (170 aa).

Tyr-22 serves as the catalytic Proton acceptor. The substrate site is built by Asn-76, His-82, and Asp-89. Catalysis depends on His-102, which acts as the Proton donor. Residues 103–104 (LT) and Arg-113 contribute to the substrate site.

This sequence belongs to the type-II 3-dehydroquinase family. As to quaternary structure, homododecamer.

It catalyses the reaction 3-dehydroquinate = 3-dehydroshikimate + H2O. The protein operates within metabolic intermediate biosynthesis; chorismate biosynthesis; chorismate from D-erythrose 4-phosphate and phosphoenolpyruvate: step 3/7. Its function is as follows. Catalyzes a trans-dehydration via an enolate intermediate. The chain is 3-dehydroquinate dehydratase (aroQ) from Helicobacter pylori (strain J99 / ATCC 700824) (Campylobacter pylori J99).